Reading from the N-terminus, the 216-residue chain is RNA pyrophosphohydrolase (216 aa).

Residues 6-149 enclose the Nudix hydrolase domain; sequence GFRPNVGIIL…KRDVYQLALT (144 aa). A Nudix box motif is present at residues 38–59; the sequence is GGIKYGETPMQAMYRELHEETG. A disordered region spans residues 159–180; it reads AQRTDKSRGPRAPRYPRVSNGH.

It belongs to the Nudix hydrolase family. RppH subfamily. Requires a divalent metal cation as cofactor.

Accelerates the degradation of transcripts by removing pyrophosphate from the 5'-end of triphosphorylated RNA, leading to a more labile monophosphorylated state that can stimulate subsequent ribonuclease cleavage. This chain is RNA pyrophosphohydrolase, found in Burkholderia thailandensis (strain ATCC 700388 / DSM 13276 / CCUG 48851 / CIP 106301 / E264).